The sequence spans 195 residues: MAEYGDQYGRQTDEYGNPIRQTGEFGATGAYGANQQYGTTGTTVGYGTDQCVTTVTTGAQKTDQYGTPGTTGAYGTDQYGTTGTTGEYGTHGGGIAPGATDAGLAGGGGGHRRLGSSGSSSSEDDGQGGRRKKGIKEKIKEKLPGGGHGDDQTHPTPPGSGGYGYEHGGAAESPEHEEKKGIMDKIKEKLPGGHH.

Positions 1-195 are disordered; sequence MAEYGDQYGR…IKEKLPGGHH (195 aa). Over residues 37-48 the composition is skewed to low complexity; it reads YGTTGTTVGYGT. A compositionally biased stretch (polar residues) spans 50–64; sequence QCVTTVTTGAQKTDQ. Low complexity predominate over residues 65 to 88; it reads YGTPGTTGAYGTDQYGTTGTTGEY. Composition is skewed to basic and acidic residues over residues 136 to 153 and 173 to 195; these read KEKI…DDQT and SPEH…GGHH.

This sequence belongs to the plant dehydrin family. In terms of processing, phosphorylated in vitro by CK2. In terms of tissue distribution, expressed in roots and leaves.

The protein localises to the cytoplasm. The protein resides in the nucleus. The sequence is that of Dehydrin DHN1 from Avicennia marina (Grey mangrove).